The sequence spans 475 residues: GTPase Der (475 aa).

2 consecutive EngA-type G domains span residues 2–166 and 213–386; these read LRIA…NIPE and LKIA…ETVS. GTP contacts are provided by residues 8-15, 55-59, 118-121, 219-226, 266-270, and 331-334; these read GRPNVGKS, DTGGV, NKAD, DTAGL, and NKWD. A KH-like domain is found at 387-471; that stretch reads RKVPTPVVNK…PFDLEIKEKA (85 aa).

This sequence belongs to the TRAFAC class TrmE-Era-EngA-EngB-Septin-like GTPase superfamily. EngA (Der) GTPase family. As to quaternary structure, associates with the 50S ribosomal subunit.

GTPase that plays an essential role in the late steps of ribosome biogenesis. The chain is GTPase Der from Chlamydia felis (strain Fe/C-56) (Chlamydophila felis).